Reading from the N-terminus, the 361-residue chain is tRNA-specific 2-thiouridylase MnmA (361 aa).

ATP-binding positions include 8-15 and Met-34; that span reads GMSGGVDS. The interaction with target base in tRNA stretch occupies residues 94 to 96; sequence NPD. The active-site Nucleophile is the Cys-99. Cysteines 99 and 195 form a disulfide. Gly-123 provides a ligand contact to ATP. The interaction with tRNA stretch occupies residues 145–147; that stretch reads KDQ. The active-site Cysteine persulfide intermediate is Cys-195. Residues 307–308 form an interaction with tRNA region; sequence RY.

The protein belongs to the MnmA/TRMU family.

The protein resides in the cytoplasm. The enzyme catalyses S-sulfanyl-L-cysteinyl-[protein] + uridine(34) in tRNA + AH2 + ATP = 2-thiouridine(34) in tRNA + L-cysteinyl-[protein] + A + AMP + diphosphate + H(+). In terms of biological role, catalyzes the 2-thiolation of uridine at the wobble position (U34) of tRNA, leading to the formation of s(2)U34. The polypeptide is tRNA-specific 2-thiouridylase MnmA (Legionella pneumophila (strain Paris)).